We begin with the raw amino-acid sequence, 204 residues long: Inactive ribonuclease-like protein 9 (204 aa).

An N-terminal signal peptide occupies residues 1-26 (MMRTPITTHPLLLLLLLQQLLQPVQF). 3 disulfides stabilise this stretch: cysteine 97–cysteine 152, cysteine 115–cysteine 167, and cysteine 122–cysteine 129. N-linked (GlcNAc...) asparagine glycosylation is found at asparagine 130 and asparagine 142.

It belongs to the pancreatic ribonuclease family.

It localises to the secreted. Its function is as follows. Does not exhibit any ribonuclease activity. In Macaca nemestrina (Pig-tailed macaque), this protein is Inactive ribonuclease-like protein 9 (RNASE9).